A 119-amino-acid chain; its full sequence is Small ribosomal subunit protein uS10 (119 aa).

Ala-2 is modified (N-acetylalanine). A Glycyl lysine isopeptide (Lys-Gly) (interchain with G-Cter in ubiquitin) cross-link involves residue Lys-4. Residue Lys-8 is modified to N6-succinyllysine; alternate. Lys-8 participates in a covalent cross-link: Glycyl lysine isopeptide (Lys-Gly) (interchain with G-Cter in ubiquitin); alternate. Thr-9 carries the phosphothreonine modification. N6-acetyllysine is present on residues Lys-34 and Lys-75. At Ser-93 the chain carries Phosphoserine.

The protein belongs to the universal ribosomal protein uS10 family. In terms of assembly, component of the 40S small ribosomal subunit. Post-translationally, polyubiquitinated by ZNF598 via 'Lys-63'-linked ubiquitin chains when a ribosome has stalled, initiating the ribosome quality control (RQC) pathway to degrade the potentially detrimental aberrant nascent polypeptide. Deubiquitinated by OTUD3 and USP21, antagonizing ZNF598 activity. Ufmylated by UFL1.

The protein localises to the cytoplasm. Functionally, component of the small ribosomal subunit. The ribosome is a large ribonucleoprotein complex responsible for the synthesis of proteins in the cell. In Rattus norvegicus (Rat), this protein is Small ribosomal subunit protein uS10 (Rps20).